A 547-amino-acid chain; its full sequence is Zinc metalloproteinase-disintegrin-like BjussuMP-1 (547 aa).

Positions 1-133 (EFKVNGEPVV…KKASKLVVTA (133 aa)) are excised as a propeptide. Residues 141–337 (RYVEIVVVVD…HNPQCILNEP (197 aa)) form the Peptidase M12B domain. Residues Glu-144 and Asp-228 each coordinate Ca(2+). 3 cysteine pairs are disulfide-bonded: Cys-252/Cys-332, Cys-292/Cys-316, and Cys-294/Cys-299. His-277 contacts Zn(2+). Glu-278 is a catalytic residue. Positions 281 and 287 each coordinate Zn(2+). Ca(2+) contacts are provided by Cys-332, Asn-335, Val-341, Asn-344, Leu-346, Glu-348, Glu-351, and Asp-354. The region spanning 339-421 (LTVSGNELLE…DCPRNRFHRN (83 aa)) is the Disintegrin domain. Cystine bridges form between Cys-353–Cys-363, Cys-362–Cys-385, Cys-376–Cys-382, Cys-381–Cys-406, Cys-394–Cys-413, Cys-425–Cys-437, Cys-444–Cys-494, Cys-459–Cys-501, Cys-472–Cys-482, Cys-489–Cys-526, and Cys-520–Cys-531. Asn-451 is a glycosylation site (N-linked (GlcNAc...) asparagine). A glycan (N-linked (GlcNAc...) asparagine) is linked at Asn-504.

Belongs to the venom metalloproteinase (M12B) family. P-III subfamily. P-IIIa sub-subfamily. As to quaternary structure, monomer. Requires Zn(2+) as cofactor. Expressed by the venom gland.

It localises to the secreted. With respect to regulation, completely inhibited by EDTA, EGTA, 1,10-phenanthroline, and partially by beta-mercaptoethanol. Is not inhibited by aprotinin and leupeptin. This protein is a zinc metalloprotease from snake venom that causes hemorrhage in mice after intradermal injection. It inhibits platelet aggregation induced by collagen and ADP. Has moderate edema activity, but no myotoxic activity. It hydrolyzes the Aalpha-chain and more slowly the Bbeta-chain of fibrinogen, without affecting the gamma-chains. It also shows proteolytic activity on casein. It is unable to clot plasma. It also shows bactericidal activity against E.coli and S.aureus. The polypeptide is Zinc metalloproteinase-disintegrin-like BjussuMP-1 (Bothrops jararacussu (Jararacussu)).